The primary structure comprises 593 residues: Aspartate--tRNA(Asp/Asn) ligase (593 aa).

Glutamate 176 lines the L-aspartate pocket. An aspartate region spans residues 200–203; the sequence is QIFK. Arginine 222 contributes to the L-aspartate binding site. Residues 222–224 and glutamine 231 each bind ATP; that span reads RDE. Histidine 450 is an L-aspartate binding site. Glutamate 490 provides a ligand contact to ATP. Arginine 497 serves as a coordination point for L-aspartate. 542-545 is a binding site for ATP; the sequence is GLDR.

It belongs to the class-II aminoacyl-tRNA synthetase family. Type 1 subfamily. In terms of assembly, homodimer.

The protein resides in the cytoplasm. It carries out the reaction tRNA(Asx) + L-aspartate + ATP = L-aspartyl-tRNA(Asx) + AMP + diphosphate. Functionally, aspartyl-tRNA synthetase with relaxed tRNA specificity since it is able to aspartylate not only its cognate tRNA(Asp) but also tRNA(Asn). Reaction proceeds in two steps: L-aspartate is first activated by ATP to form Asp-AMP and then transferred to the acceptor end of tRNA(Asp/Asn). This chain is Aspartate--tRNA(Asp/Asn) ligase, found in Symbiobacterium thermophilum (strain DSM 24528 / JCM 14929 / IAM 14863 / T).